The following is a 238-amino-acid chain: Testis-specific gene A8 protein (238 aa).

The tract at residues 35-238 is disordered; that stretch reads GKGAKTNKRG…GEAVATTTMT (204 aa). Residues 39–48 are compositionally biased toward basic residues; it reads KTNKRGKRGG. 8 consecutive repeat copies span residues 79 to 93, 94 to 108, 109 to 123, 124 to 138, 153 to 158, 171 to 176, 180 to 185, and 189 to 194. The tract at residues 79-148 is 4 X 15 AA tandem repeats of A-A-A-A-A-P-E-A-A-A-S-[PL]-E-S-S; the sequence is AAAAAPEAAA…AAAAAPEAAA (70 aa). Low complexity-rich tracts occupy residues 79-200 and 208-220; these read AAAA…AAPA and WEAAAVVGEAAVK. A 4 X 6 AA repeats of P-A-A-P-E-A region spans residues 153–194; the sequence is PAAPEAAAAPEVAAAPATPAAPEATAAPAAPEAATTPAAPEA.

In terms of tissue distribution, specifically expressed in testis (at protein level).

Its subcellular location is the cytoplasm. The protein localises to the nucleus. It is found in the nucleoplasm. The chain is Testis-specific gene A8 protein from Mus musculus (Mouse).